Here is a 446-residue protein sequence, read N- to C-terminus: Chromosomal replication initiator protein DnaA (446 aa).

A domain I, interacts with DnaA modulators region spans residues 1–81; it reads MENIADLWNS…AKLNIRFIIP (81 aa). Residues 81–109 form a domain II region; that stretch reads PQSQTEEEVDYPPAKAKKMNDESNHLPQS. Residues 110–326 are domain III, AAA+ region; that stretch reads MLNPKYTFDT…GALIRVVAYS (217 aa). The ATP site is built by Gly-154, Gly-156, Lys-157, and Thr-158. Positions 327–446 are domain IV, binds dsDNA; that stretch reads SLINKDINAD…QIEEINDILK (120 aa).

It belongs to the DnaA family. Oligomerizes as a right-handed, spiral filament on DNA at oriC.

The protein resides in the cytoplasm. In terms of biological role, plays an essential role in the initiation and regulation of chromosomal replication. ATP-DnaA binds to the origin of replication (oriC) to initiate formation of the DNA replication initiation complex once per cell cycle. Binds the DnaA box (a 9 base pair repeat at the origin) and separates the double-stranded (ds)DNA. Forms a right-handed helical filament on oriC DNA; dsDNA binds to the exterior of the filament while single-stranded (ss)DNA is stabiized in the filament's interior. The ATP-DnaA-oriC complex binds and stabilizes one strand of the AT-rich DNA unwinding element (DUE), permitting loading of DNA polymerase. After initiation quickly degrades to an ADP-DnaA complex that is not apt for DNA replication. Binds acidic phospholipids. The chain is Chromosomal replication initiator protein DnaA from Bacillus cytotoxicus (strain DSM 22905 / CIP 110041 / 391-98 / NVH 391-98).